Consider the following 133-residue polypeptide: UPF0146 protein MTH_1000 (133 aa).

This sequence belongs to the UPF0146 family.

In Methanothermobacter thermautotrophicus (strain ATCC 29096 / DSM 1053 / JCM 10044 / NBRC 100330 / Delta H) (Methanobacterium thermoautotrophicum), this protein is UPF0146 protein MTH_1000.